Consider the following 165-residue polypeptide: Peptidyl-prolyl cis-trans isomerase NIMA-interacting 1 (165 aa).

The 35-residue stretch at 5–39 (EKLPPGWEKRMSRSSGRVYYFNHITNASQWERPSG) folds into the WW domain. The disordered stretch occupies residues 33 to 56 (QWERPSGGSTVGGSSKNGQGEPAK). K48 bears the N6-acetyllysine mark. The PpiC domain occupies 54–165 (PAKVRCSHLL…SGIHIILRTE (112 aa)). Phosphoserine occurs at positions 73 and 110.

In terms of assembly, interacts with STIL. Interacts with KIF20B. Interacts with NEK6. Interacts (via WW domain) with PRKX. Interacts with BTK. Interacts (via PpiC domain) with DAPK1. Interacts with the phosphorylated form of RAF1. Interacts (via WW domain) with ATCAY; upon NGF stimulation. Interacts with PML. Interacts with BCL6. Interacts with FBXW7, disrupting FBXW7 dimerization and promoting FBXW7 autoubiquitination and degradation. Directly interacts with RBBP8/CtIP; this interaction depends upon RBBP8 phosphorylation. Interacts (via WW domain) with IRAK3/IRAK-M (when phosphorylated at 'Ser-110') in response to IL33-mediated (but not TLR4 ligand LPS) dendritic cell stimulation. Interacts with PGK1 (when phosphorylated at 'Ser-203'); the interaction is direct, occurs under hypoxic conditions, and targets PGK1 to the mitochondrion by promoting interactions with the TOM complex. Post-translationally, phosphorylation at Ser-73 by DAPK1 results in inhibition of its catalytic activity, nuclear localization, and its ability to induce centrosome amplification, chromosome instability and cell transformation. Ser-73 is dephosphorylated upon IL33-stimulation of dendritic cells. In terms of tissue distribution, expressed in dendritic cells (at protein level).

It localises to the nucleus. Its subcellular location is the nucleus speckle. The protein localises to the cytoplasm. The catalysed reaction is [protein]-peptidylproline (omega=180) = [protein]-peptidylproline (omega=0). Functionally, peptidyl-prolyl cis/trans isomerase (PPIase) that binds to and isomerizes specific phosphorylated Ser/Thr-Pro (pSer/Thr-Pro) motifs. By inducing conformational changes in a subset of phosphorylated proteins, acts as a molecular switch in multiple cellular processes. Displays a preference for an acidic residue N-terminal to the isomerized proline bond. Regulates mitosis presumably by interacting with NIMA and attenuating its mitosis-promoting activity. Down-regulates kinase activity of BTK. Can transactivate multiple oncogenes and induce centrosome amplification, chromosome instability and cell transformation. Required for the efficient dephosphorylation and recycling of RAF1 after mitogen activation. Binds and targets PML and BCL6 for degradation in a phosphorylation-dependent manner. Acts as a regulator of JNK cascade by binding to phosphorylated FBXW7, disrupting FBXW7 dimerization and promoting FBXW7 autoubiquitination and degradation: degradation of FBXW7 leads to subsequent stabilization of JUN. May facilitate the ubiquitination and proteasomal degradation of RBBP8/CtIP through CUL3/KLHL15 E3 ubiquitin-protein ligase complex, hence favors DNA double-strand repair through error-prone non-homologous end joining (NHEJ) over error-free, RBBP8-mediated homologous recombination (HR). Upon IL33-induced lung inflammation, catalyzes cis-trans isomerization of phosphorylated IRAK3/IRAK-M, inducing IRAK3 stabilization, nuclear translocation and expression of pro-inflammatory genes in dendritic cells. Catalyzes cis-trans isomerization of phosphorylated phosphoglycerate kinase PGK1 under hypoxic conditions to promote its binding to the TOM complex and targeting to the mitochondrion. This is Peptidyl-prolyl cis-trans isomerase NIMA-interacting 1 (Pin1) from Mus musculus (Mouse).